Here is a 102-residue protein sequence, read N- to C-terminus: Small ribosomal subunit protein uS10 (102 aa).

It belongs to the universal ribosomal protein uS10 family. Part of the 30S ribosomal subunit.

Functionally, involved in the binding of tRNA to the ribosomes. In Nitrosospira multiformis (strain ATCC 25196 / NCIMB 11849 / C 71), this protein is Small ribosomal subunit protein uS10.